Here is a 251-residue protein sequence, read N- to C-terminus: HTH-type transcriptional regulator UlaR (251 aa).

One can recognise an HTH deoR-type domain in the interval 3–58; the sequence is EAQRHQILLDMLAQLGFVTVENVIERLGISPATARRDINKLDESGKLKKVRNGAEA. Positions 20-39 form a DNA-binding region, H-T-H motif; that stretch reads VTVENVIERLGISPATARRD.

The protein resides in the cytoplasm. Represses ulaG and the ulaABCDEF operon. This Salmonella arizonae (strain ATCC BAA-731 / CDC346-86 / RSK2980) protein is HTH-type transcriptional regulator UlaR.